The sequence spans 154 residues: AP-1 complex subunit sigma-3 (154 aa).

The protein belongs to the adaptor complexes small subunit family. In terms of assembly, adaptor protein complex 1 (AP-1) is a heterotetramer composed of two large adaptins (gamma-type subunit AP1G1 and beta-type subunit AP1B1), a medium adaptin (mu-type subunit AP1M1 or AP1M2) and a small adaptin (sigma-type subunit AP1S1 or AP1S2 or AP1S3). As to expression, widely expressed.

Its subcellular location is the golgi apparatus. The protein resides in the cytoplasmic vesicle membrane. It localises to the membrane. It is found in the clathrin-coated pit. Subunit of clathrin-associated adaptor protein complex 1 that plays a role in protein sorting in the late-Golgi/trans-Golgi network (TGN) and/or endosomes. The AP complexes mediate both the recruitment of clathrin to membranes and the recognition of sorting signals within the cytosolic tails of transmembrane cargo molecules. Involved in TLR3 trafficking. In Homo sapiens (Human), this protein is AP-1 complex subunit sigma-3 (AP1S3).